The chain runs to 334 residues: UDP-N-acetylglucosamine 4,6-dehydratase (inverting) (334 aa).

Residues 13 to 16 (TGSF), 37 to 42 (SRDELK), 61 to 62 (DV), A81, K85, and 123 to 124 (LS) contribute to the NADP(+) site. K85 is a substrate binding site. K127 is an active-site residue. Positions 135 and 139 each coordinate NADP(+). N167 lines the substrate pocket. 168–172 (VVGSR) is a binding site for NADP(+). 4 residues coordinate substrate: V175, T193, R252, and E255.

It belongs to the polysaccharide synthase family. In terms of assembly, homohexamer. The cofactor is NADP(+).

It catalyses the reaction UDP-N-acetyl-alpha-D-glucosamine = UDP-2-acetamido-2,6-dideoxy-beta-L-arabino-hex-4-ulose + H2O. Functionally, catalyzes the first step in the biosynthesis of pseudaminic acid, a sialic-acid-like sugar that is used to modify flagellin. Has both C6 dehydratase and C5 epimerase activities that result in the production of both UDP-2-acetamido-2,6-dideoxy-beta-L-arabino-4-hexulose and UDP-2-acetamido-2,6-dideoxy-alpha-D-xylo-4-hexulose. The chain is UDP-N-acetylglucosamine 4,6-dehydratase (inverting) (pseB) from Campylobacter jejuni subsp. jejuni serotype O:23/36 (strain 81-176).